Consider the following 81-residue polypeptide: Photosystem I iron-sulfur center (81 aa).

4Fe-4S ferredoxin-type domains lie at 2–31 and 37–68; these read SHSV…MVPW and GQIA…VRVY. [4Fe-4S] cluster contacts are provided by cysteine 11, cysteine 14, cysteine 17, cysteine 21, cysteine 48, cysteine 51, cysteine 54, and cysteine 58.

In terms of assembly, the cyanobacterial PSI reaction center is composed of one copy each of PsaA,B,C,D,E,F,I,J,K,L,M and X, and forms trimeric complexes. It depends on [4Fe-4S] cluster as a cofactor.

Its subcellular location is the cellular thylakoid membrane. The catalysed reaction is reduced [plastocyanin] + hnu + oxidized [2Fe-2S]-[ferredoxin] = oxidized [plastocyanin] + reduced [2Fe-2S]-[ferredoxin]. Its function is as follows. Apoprotein for the two 4Fe-4S centers FA and FB of photosystem I (PSI); essential for photochemical activity. FB is the terminal electron acceptor of PSI, donating electrons to ferredoxin. The C-terminus interacts with PsaA/B/D and helps assemble the protein into the PSI complex. Required for binding of PsaD and PsaE to PSI. PSI is a plastocyanin/cytochrome c6-ferredoxin oxidoreductase, converting photonic excitation into a charge separation, which transfers an electron from the donor P700 chlorophyll pair to the spectroscopically characterized acceptors A0, A1, FX, FA and FB in turn. This Trichodesmium erythraeum (strain IMS101) protein is Photosystem I iron-sulfur center.